We begin with the raw amino-acid sequence, 135 residues long: ATP synthase epsilon chain (135 aa).

Positions 84–107 are disordered; that stretch reads SLSEEKQSEEQKQRLERAKKALSS. A compositionally biased stretch (basic and acidic residues) spans 86-102; the sequence is SEEKQSEEQKQRLERAK.

This sequence belongs to the ATPase epsilon chain family. F-type ATPases have 2 components, CF(1) - the catalytic core - and CF(0) - the membrane proton channel. CF(1) has five subunits: alpha(3), beta(3), gamma(1), delta(1), epsilon(1). CF(0) has three main subunits: a, b and c.

The protein localises to the cell membrane. In terms of biological role, produces ATP from ADP in the presence of a proton gradient across the membrane. The chain is ATP synthase epsilon chain from Elusimicrobium minutum (strain Pei191).